Here is a 172-residue protein sequence, read N- to C-terminus: Large ribosomal subunit protein uL10 (172 aa).

The protein belongs to the universal ribosomal protein uL10 family. Part of the ribosomal stalk of the 50S ribosomal subunit. The N-terminus interacts with L11 and the large rRNA to form the base of the stalk. The C-terminus forms an elongated spine to which L12 dimers bind in a sequential fashion forming a multimeric L10(L12)X complex.

Its function is as follows. Forms part of the ribosomal stalk, playing a central role in the interaction of the ribosome with GTP-bound translation factors. The polypeptide is Large ribosomal subunit protein uL10 (Chlorobium chlorochromatii (strain CaD3)).